Here is a 349-residue protein sequence, read N- to C-terminus: Ribosomal RNA small subunit methyltransferase H 1 (349 aa).

S-adenosyl-L-methionine is bound by residues Gly79 to His81, Asp99, Phe129, Asp148, and Gln155.

It belongs to the methyltransferase superfamily. RsmH family.

The protein localises to the cytoplasm. The enzyme catalyses cytidine(1402) in 16S rRNA + S-adenosyl-L-methionine = N(4)-methylcytidine(1402) in 16S rRNA + S-adenosyl-L-homocysteine + H(+). In terms of biological role, specifically methylates the N4 position of cytidine in position 1402 (C1402) of 16S rRNA. The protein is Ribosomal RNA small subunit methyltransferase H 1 of Agathobacter rectalis (strain ATCC 33656 / DSM 3377 / JCM 17463 / KCTC 5835 / VPI 0990) (Eubacterium rectale).